The primary structure comprises 398 residues: 1-deoxy-D-xylulose 5-phosphate reductoisomerase (398 aa).

Positions 10, 11, 12, 13, 38, and 124 each coordinate NADPH. Lys125 is a binding site for 1-deoxy-D-xylulose 5-phosphate. NADPH is bound at residue Glu126. Position 150 (Asp150) interacts with Mn(2+). 1-deoxy-D-xylulose 5-phosphate-binding residues include Ser151, Glu152, Ser186, and His209. Glu152 provides a ligand contact to Mn(2+). Gly215 provides a ligand contact to NADPH. 4 residues coordinate 1-deoxy-D-xylulose 5-phosphate: Ser222, Asn227, Lys228, and Glu231. Glu231 is a Mn(2+) binding site.

This sequence belongs to the DXR family. Mg(2+) is required as a cofactor. Requires Mn(2+) as cofactor.

The catalysed reaction is 2-C-methyl-D-erythritol 4-phosphate + NADP(+) = 1-deoxy-D-xylulose 5-phosphate + NADPH + H(+). It functions in the pathway isoprenoid biosynthesis; isopentenyl diphosphate biosynthesis via DXP pathway; isopentenyl diphosphate from 1-deoxy-D-xylulose 5-phosphate: step 1/6. Its function is as follows. Catalyzes the NADPH-dependent rearrangement and reduction of 1-deoxy-D-xylulose-5-phosphate (DXP) to 2-C-methyl-D-erythritol 4-phosphate (MEP). This Baumannia cicadellinicola subsp. Homalodisca coagulata protein is 1-deoxy-D-xylulose 5-phosphate reductoisomerase.